A 331-amino-acid chain; its full sequence is DNA-directed RNA polymerase subunit alpha (331 aa).

The segment at 1-233 (MVREEIAVST…DLFLPFLHAE (233 aa)) is alpha N-terminal domain (alpha-NTD). Positions 268–331 (ALKRVFIDQS…GILQKRFAID (64 aa)) are alpha C-terminal domain (alpha-CTD).

This sequence belongs to the RNA polymerase alpha chain family. In plastids the minimal PEP RNA polymerase catalytic core is composed of four subunits: alpha, beta, beta', and beta''. When a (nuclear-encoded) sigma factor is associated with the core the holoenzyme is formed, which can initiate transcription.

The protein resides in the plastid. It is found in the chloroplast. It catalyses the reaction RNA(n) + a ribonucleoside 5'-triphosphate = RNA(n+1) + diphosphate. Its function is as follows. DNA-dependent RNA polymerase catalyzes the transcription of DNA into RNA using the four ribonucleoside triphosphates as substrates. The sequence is that of DNA-directed RNA polymerase subunit alpha from Illicium oligandrum (Star anise).